The following is a 579-amino-acid chain: Carboxysome shell carbonic anhydrase (579 aa).

Positions 72–95 are disordered; sequence GGGRVRSARDQRQPGWVRRDKGAT. Residues 78–93 are compositionally biased toward basic and acidic residues; sequence SARDQRQPGWVRRDKG. Cysteine 240 is a binding site for Zn(2+). Aspartate 242 functions as the Proton acceptor in the catalytic mechanism. Histidine 308 and cysteine 319 together coordinate Zn(2+).

This sequence belongs to the beta-class carbonic anhydrase family. CsoSCA subfamily. As to quaternary structure, homodimer. Zn(2+) is required as a cofactor.

Its subcellular location is the carboxysome. The enzyme catalyses hydrogencarbonate + H(+) = CO2 + H2O. Inhibited by dithiothreitol, partially inhibited by acetatzolamide and cyanide. Its function is as follows. Reversible hydration of carbon dioxide. Essential for photosynthetic carbon dioxide fixation, supplies CO(2) to RuBisCO (ribulose bisphosphate carboxylase, cbbL-cbbS) in the carboxysome. This Parasynechococcus marenigrum (strain WH8102) protein is Carboxysome shell carbonic anhydrase.